Consider the following 198-residue polypeptide: dTTP/UTP pyrophosphatase (198 aa).

Residue Asp-78 is the Proton acceptor of the active site.

This sequence belongs to the Maf family. YhdE subfamily. The cofactor is a divalent metal cation.

The protein resides in the cytoplasm. The enzyme catalyses dTTP + H2O = dTMP + diphosphate + H(+). It carries out the reaction UTP + H2O = UMP + diphosphate + H(+). Nucleoside triphosphate pyrophosphatase that hydrolyzes dTTP and UTP. May have a dual role in cell division arrest and in preventing the incorporation of modified nucleotides into cellular nucleic acids. The protein is dTTP/UTP pyrophosphatase of Chromobacterium violaceum (strain ATCC 12472 / DSM 30191 / JCM 1249 / CCUG 213 / NBRC 12614 / NCIMB 9131 / NCTC 9757 / MK).